The following is a 217-amino-acid chain: Adenylate kinase (217 aa).

10 to 15 provides a ligand contact to ATP; it reads GAGKGT. Residues 30 to 59 form an NMP region; the sequence is STGDIFRAAMKNETPMGIEAKKYIDKGELV. AMP contacts are provided by residues threonine 31, arginine 36, 57 to 59, 85 to 88, and glutamine 92; these read ELV and GFPR. Residues 126-164 are LID; sequence GRFICRNCGATYHKLYNAPKVEGTCDVCGHHEFYQRDDD. Position 127 (arginine 127) interacts with ATP. Positions 130 and 133 each coordinate Zn(2+). ATP is bound at residue 136 to 137; that stretch reads TY. Cysteine 150 and cysteine 153 together coordinate Zn(2+). The AMP site is built by arginine 161 and arginine 172. Glutamine 200 contacts ATP.

It belongs to the adenylate kinase family. Monomer.

It is found in the cytoplasm. The enzyme catalyses AMP + ATP = 2 ADP. It functions in the pathway purine metabolism; AMP biosynthesis via salvage pathway; AMP from ADP: step 1/1. Functionally, catalyzes the reversible transfer of the terminal phosphate group between ATP and AMP. Plays an important role in cellular energy homeostasis and in adenine nucleotide metabolism. The protein is Adenylate kinase of Limosilactobacillus reuteri subsp. reuteri (strain JCM 1112) (Lactobacillus reuteri).